A 269-amino-acid chain; its full sequence is Hydroxyethylthiazole kinase (269 aa).

Position 45 (Met45) interacts with substrate. ATP is bound by residues Arg121 and Thr167. Gly194 contributes to the substrate binding site.

It belongs to the Thz kinase family. The cofactor is Mg(2+).

It catalyses the reaction 5-(2-hydroxyethyl)-4-methylthiazole + ATP = 4-methyl-5-(2-phosphooxyethyl)-thiazole + ADP + H(+). The protein operates within cofactor biosynthesis; thiamine diphosphate biosynthesis; 4-methyl-5-(2-phosphoethyl)-thiazole from 5-(2-hydroxyethyl)-4-methylthiazole: step 1/1. Its function is as follows. Catalyzes the phosphorylation of the hydroxyl group of 4-methyl-5-beta-hydroxyethylthiazole (THZ). The polypeptide is Hydroxyethylthiazole kinase (Bacillus cereus (strain ATCC 14579 / DSM 31 / CCUG 7414 / JCM 2152 / NBRC 15305 / NCIMB 9373 / NCTC 2599 / NRRL B-3711)).